The following is a 276-amino-acid chain: Halorhodopsin (276 aa).

A propeptide spanning residues 1-21 is cleaved from the precursor; it reads MTAVSTTATTVLQATQSDVLQ. The Extracellular segment spans residues 22 to 25; sequence EIQS. A helical membrane pass occupies residues 26 to 51; it reads NFLLNSSIWVNIALAGVVILLFVAMG. At 52-57 the chain is on the cytoplasmic side; the sequence is RDLESP. A helical membrane pass occupies residues 58–81; sequence RAKLIWVATMLVPLVSISSYAGLA. At 82–105 the chain is on the extracellular side; sequence SGLTVGFLQMPPGHALAGQEVLSP. Residues 106-127 form a helical membrane-spanning segment; that stretch reads WGRYLTWTFSTPMILLALGLLA. Residues 128-130 are Cytoplasmic-facing; that stretch reads DTD. The helical transmembrane segment at 131-154 threads the bilayer; it reads IASLFTAITMDIGMCVTGLAAALI. Over 155 to 157 the chain is Extracellular; that stretch reads TSS. Residues 158-180 form a helical membrane-spanning segment; that stretch reads HLLRWVFYGISCAFFVAVLYVLL. At 181–192 the chain is on the cytoplasmic side; that stretch reads VQWPADAEAAGT. A helical membrane pass occupies residues 193 to 216; sequence SEIFGTLKILTVVLWLGYPILWAL. Residues 217–225 are Extracellular-facing; that stretch reads GSEGVALLS. Residues 226–254 traverse the membrane as a helical segment; that stretch reads VGVTSWGYSGLDILAKYVFAFLLLRWVAA. K241 carries the post-translational modification N6-(retinylidene)lysine. At 255 to 276 the chain is on the cytoplasmic side; the sequence is NEGTVSGSGMGIGSGGAAPADD.

It belongs to the archaeal/bacterial/fungal opsin family.

It is found in the cell membrane. Functionally, light-driven anion pump. This Halobacterium halobium (strain shark) protein is Halorhodopsin.